The primary structure comprises 58 residues: Large ribosomal subunit protein eL37 (58 aa).

Zn(2+) is bound by residues cysteine 20, cysteine 23, cysteine 35, and cysteine 38. Residues 20 to 38 (CRRCGEKSYHTKKKVCSSC) form a C4-type zinc finger.

It belongs to the eukaryotic ribosomal protein eL37 family. The cofactor is Zn(2+).

Binds to the 23S rRNA. The chain is Large ribosomal subunit protein eL37 from Haloquadratum walsbyi (strain DSM 16790 / HBSQ001).